The sequence spans 311 residues: Ribosomal protein L11 methyltransferase (311 aa).

Residues Thr-162, Gly-183, Asp-205, and Asn-248 each coordinate S-adenosyl-L-methionine.

It belongs to the methyltransferase superfamily. PrmA family.

It is found in the cytoplasm. The catalysed reaction is L-lysyl-[protein] + 3 S-adenosyl-L-methionine = N(6),N(6),N(6)-trimethyl-L-lysyl-[protein] + 3 S-adenosyl-L-homocysteine + 3 H(+). Methylates ribosomal protein L11. The protein is Ribosomal protein L11 methyltransferase of Bacillus subtilis (strain 168).